A 628-amino-acid polypeptide reads, in one-letter code: Very-long-chain aldehyde decarbonylase GL1-2 (628 aa).

A run of 5 helical transmembrane segments spans residues 37-57, 131-151, 191-211, 299-319, and 331-351; these read GAAPVGSWWLHLLLLFAARGL, GWAIALLLHVLVAEPLFYWAH, VVIGVPLAGAFLMGVGSVGLV, DFVFLAHVVDIMASMHVPFVL, and FVLLPFWPVAFGFMLLMWCCS. The Fatty acid hydroxylase domain occupies 137-277; sequence LLHVLVAEPL…MPIFDLLGGT (141 aa).

The protein belongs to the sterol desaturase family. In terms of assembly, homodimer.

It localises to the endoplasmic reticulum membrane. The catalysed reaction is a long-chain fatty aldehyde + 2 NADPH + O2 + H(+) = a long-chain alkane + formate + 2 NADP(+) + H2O. Its function is as follows. Aldehyde decarbonylase involved in the conversion of aldehydes to alkanes. Core component of a very-long-chain alkane synthesis complex. The protein is Very-long-chain aldehyde decarbonylase GL1-2 of Oryza sativa subsp. indica (Rice).